A 234-amino-acid chain; its full sequence is Ubiquitin carboxyl-terminal hydrolase 3 (234 aa).

The 221-residue stretch at 12–232 folds into the UCH catalytic domain; it reads RWLPLESNPD…LNFNLIAISK (221 aa). Residue cysteine 101 is the Nucleophile of the active site. The active-site Proton donor is the histidine 172.

Belongs to the peptidase C12 family.

It catalyses the reaction Thiol-dependent hydrolysis of ester, thioester, amide, peptide and isopeptide bonds formed by the C-terminal Gly of ubiquitin (a 76-residue protein attached to proteins as an intracellular targeting signal).. This is Ubiquitin carboxyl-terminal hydrolase 3 from Arabidopsis thaliana (Mouse-ear cress).